We begin with the raw amino-acid sequence, 343 residues long: UDP-3-O-acylglucosamine N-acyltransferase 2 (343 aa).

His-251 functions as the Proton acceptor in the catalytic mechanism.

This sequence belongs to the transferase hexapeptide repeat family. LpxD subfamily. In terms of assembly, homotrimer.

It carries out the reaction a UDP-3-O-[(3R)-3-hydroxyacyl]-alpha-D-glucosamine + a (3R)-hydroxyacyl-[ACP] = a UDP-2-N,3-O-bis[(3R)-3-hydroxyacyl]-alpha-D-glucosamine + holo-[ACP] + H(+). The protein operates within bacterial outer membrane biogenesis; LPS lipid A biosynthesis. Its function is as follows. Catalyzes the N-acylation of UDP-3-O-acylglucosamine using 3-hydroxyacyl-ACP as the acyl donor. Is involved in the biosynthesis of lipid A, a phosphorylated glycolipid that anchors the lipopolysaccharide to the outer membrane of the cell. The chain is UDP-3-O-acylglucosamine N-acyltransferase 2 from Legionella pneumophila (strain Lens).